Reading from the N-terminus, the 791-residue chain is Disintegrin and metalloproteinase domain-containing protein 1a (791 aa).

The N-terminal stretch at 1–65 (MSVAAAGRGF…LLIFLPSTFC (65 aa)) is a signal peptide. N72 is a glycosylation site (N-linked (GlcNAc...) asparagine). A disordered region spans residues 201–220 (CSVTPKDSPGDTSHPPRSRK). One can recognise a Peptidase M12B domain in the interval 235-429 (KYVEMFVVVN…HRGACLLDEP (195 aa)). An N-linked (GlcNAc...) asparagine glycan is attached at N256. 3 disulfide bridges follow: C345–C424, C385–C408, and C387–C393. H370 is a binding site for Zn(2+). Residue E371 is part of the active site. Zn(2+) is bound by residues H374 and H380. N407 and N484 each carry an N-linked (GlcNAc...) asparagine glycan. In terms of domain architecture, Disintegrin spans 438–522 (AANCGNGVVE…ECPANSYMQD (85 aa)). C494 and C514 are oxidised to a cystine. N630 carries an N-linked (GlcNAc...) asparagine glycan. Positions 663 to 697 (LQYNCEPQEMCHGNGVCNNFKHCHCDAGFAPPDCS) constitute an EGF-like domain. Disulfide bonds link C667/C679, C673/C685, and C687/C696. A helical transmembrane segment spans residues 741–761 (VMVLVVPIFLVVLLCCLMLIA). At 762 to 791 (YLWSEVQEVVSPPSSSESSSSSSWSDSDSQ) the chain is on the cytoplasmic side. Residues 772–791 (SPPSSSESSSSSSWSDSDSQ) are disordered.

As to quaternary structure, heterodimer with ADAM2/fertilin subunit beta. As to expression, testis.

The protein resides in the membrane. In terms of biological role, may be involved in sperm-egg fusion. The protein is Disintegrin and metalloproteinase domain-containing protein 1a (Adam1a) of Mus musculus (Mouse).